The sequence spans 309 residues: Partitioning defective protein 6 (309 aa).

Residues 14-96 (TLQVKSKFDS…PLLRLLIQRR (83 aa)) enclose the PB1 domain. In terms of domain architecture, Pseudo-CRIB spans 132-149 (ISNPEDFRQVSAIIDVDI). The region spanning 156 to 249 (RVRLCKHGQE…NLIITVKPAN (94 aa)) is the PDZ domain. A compositionally biased stretch (polar residues) spans 249–270 (NQRNTLSRGPSQQGTPNASEMS). The segment at 249-309 (NQRNTLSRGP…DANDSDSGED (61 aa)) is disordered.

Belongs to the PAR6 family. Interacts with par-3, required for its peripheral localization, and with cdc-42, required for the activation of a par-3/par-6/pkc-3 complex. As to expression, colocalized with par-3 at all stages in early embryos, at the anterior cortex of the embryo. Patchy expression observed at the periphery after completion of meiosis I and in meiosis II, which on completion of metaphase II, is restricted to the anterior 85% of embryo length; this decreases to 55% in embryos between prophase and telophase of the first mitosis. During the first cleavage, expression is detected in the advancing furrow. Along with pkc-3, is unable to associate with the apical cortex of cells that lack par-3. Transiently coexpressed and colocalized with par-3 and pkc-3, asymmetrically in the developing somatic gonad, including the spermathecal precursor cells of L4 larvae.

It localises to the cytoplasm. It is found in the cell membrane. The protein localises to the cell junction. The protein resides in the tight junction. In terms of biological role, necessary for apicobasal and anterior-posterior asymmetries associated with cell adhesion and gastrulation during the first few cell cycles of embryogenesis. Required for localizing/ maintaining par-3 at the cell periphery. Regulates mes-1 expression and/or localization pattern during early embryogenesis. Acts together with par-3 and pkc-3 in maintaining epithelial cell polarity in the distal spermatheca. Plays a role in endosome and Golgi body positioning. This chain is Partitioning defective protein 6, found in Caenorhabditis elegans.